The primary structure comprises 76 residues: Esculentin-2-ALb (76 aa).

An N-terminal signal peptide occupies residues 1–22 (MFTMKKSLLLLFFLGTISLSLC). Residues 23-39 (EEERSADEDDGEKGVKR) constitute a propeptide that is removed on maturation. C70 and C76 are joined by a disulfide.

In terms of tissue distribution, expressed by the skin glands.

Its subcellular location is the secreted. Its function is as follows. Antimicrobial peptide with activity against Gram-positive and Gram-negative bacteria and against fungi. Has been tested against S.aureus (MIC=1.25 ug/mL), B.pumilus (MIC=2.5 ug/mL), B.cereus (MIC=7.5 ug/mL), E.coli (MIC=12.5 ug/mL), B.dysenteriae (MIC=7.5 ug/mL), A.cacoaceticus (MIC=12.5 ug/mL), P.aeruginosa (MIC=50.0 ug/mL) and C.albicans (MIC=2.5 ug/mL). Also shows a weak hemolytic activity. In Amolops loloensis (Lolokou Sucker Frog), this protein is Esculentin-2-ALb.